A 299-amino-acid polypeptide reads, in one-letter code: MITFLPIIFSILVVVTFVIGNFANGFIALVNSTEWVKRQKISFADQIVTALAVSRVGLLWVLLLNWYSTVLNPAFCSVELRTTAYNIWAVTGHFSNWPATSLSIFYLLKIANFSNLIFLRLKRRVKSVILVVLLGPLLFLACHLFVVNMNQIVWTKEYEGNMTWKIKLRRAMYLSDTTVTMLANLVPFTVTLISFLLLVCSLCKHLKKMQLHGKGSQDPSTKVHIKVLQTVISFFLLRAIYFVSVIISVWSFKNLENKPVFMFCQAIGFSCSSAHPFILIWGNKKLKQTYLSVLWQMRY.

A topological domain (extracellular) is located at residue M1. A helical transmembrane segment spans residues 2–22 (ITFLPIIFSILVVVTFVIGNF). Topologically, residues 23–55 (ANGFIALVNSTEWVKRQKISFADQIVTALAVSR) are cytoplasmic. The chain crosses the membrane as a helical span at residues 56–76 (VGLLWVLLLNWYSTVLNPAFC). The Extracellular portion of the chain corresponds to 77 to 98 (SVELRTTAYNIWAVTGHFSNWP). A helical transmembrane segment spans residues 99–119 (ATSLSIFYLLKIANFSNLIFL). The Cytoplasmic segment spans residues 120–126 (RLKRRVK). A helical transmembrane segment spans residues 127-147 (SVILVVLLGPLLFLACHLFVV). At 148–178 (NMNQIVWTKEYEGNMTWKIKLRRAMYLSDTT) the chain is on the extracellular side. N161 carries an N-linked (GlcNAc...) asparagine glycan. Residues 179 to 199 (VTMLANLVPFTVTLISFLLLV) traverse the membrane as a helical segment. Residues 200-229 (CSLCKHLKKMQLHGKGSQDPSTKVHIKVLQ) lie on the Cytoplasmic side of the membrane. A helical membrane pass occupies residues 230–250 (TVISFFLLRAIYFVSVIISVW). The Extracellular segment spans residues 251–259 (SFKNLENKP). A helical membrane pass occupies residues 260–280 (VFMFCQAIGFSCSSAHPFILI). Residues 281–299 (WGNKKLKQTYLSVLWQMRY) lie on the Cytoplasmic side of the membrane.

It belongs to the G-protein coupled receptor T2R family. Expressed in subsets of taste receptor cells of the tongue and exclusively in gustducin-positive cells.

It is found in the membrane. Receptor that may play a role in the perception of bitterness and is gustducin-linked. May play a role in sensing the chemical composition of the gastrointestinal content. The activity of this receptor may stimulate alpha gustducin, mediate PLC-beta-2 activation and lead to the gating of TRPM5. This is Taste receptor type 2 member 45 (TAS2R45) from Homo sapiens (Human).